A 1167-amino-acid chain; its full sequence is Tight junction protein 2 (1167 aa).

One can recognise a PDZ 1 domain in the interval 10–97 (TVTLQKDSKR…IAAIVVKRPR (88 aa)). Residues Ser107, Ser127, Ser130, Ser140, Ser145, Ser147, Ser173, Ser194, Ser205, and Ser239 each carry the phosphoserine modification. The segment at 129 to 195 (RSGYSERSRH…SRERSRGRSL (67 aa)) is disordered. The interval 225 to 286 (SYHEAYEPDY…KGQHDPDRPI (62 aa)) is disordered. Positions 242 to 262 (YDRRAHPETRYERSRSREHLR) are enriched in basic and acidic residues. The PDZ 2 domain maps to 287-365 (GVLLTKSKAN…KLQLVVLRDS (79 aa)). 8 positions are modified to phosphoserine: Ser305, Ser378, Ser380, Ser386, Ser395, Ser404, Ser410, and Ser411. The disordered stretch occupies residues 381–485 (EVEDISEIES…LRPSPEDEAI (105 aa)). Basic and acidic residues predominate over residues 395–426 (SPEERRQQYSDQDYHSSTEKLKERPSSREETS). At Thr435 the chain carries Phosphothreonine. At Ser479 the chain carries Phosphoserine. A PDZ 3 domain is found at 489–570 (NTKMVRFKKG…GETVTILAQS (82 aa)). Residue Tyr554 is modified to Phosphotyrosine. Positions 584–649 (GDSFFIRSHF…PNKSRAEQMA (66 aa)) constitute an SH3 domain. The Guanylate kinase-like domain maps to 660–858 (GDRADFWRMR…WFGSLKDSIQ (199 aa)). Phosphoserine is present on residues Ser684 and Ser884. Thr887 is subject to Phosphothreonine. Phosphoserine is present on residues Ser895 and Ser902. Disordered stretches follow at residues 904 to 1055 (FEDT…PRSV) and 1095 to 1167 (YAVP…DTEL). Phosphothreonine is present on residues Thr907 and Thr915. Basic and acidic residues predominate over residues 938–949 (VQHEENIRKSSP). 5 positions are modified to phosphoserine: Ser948, Ser960, Ser968, Ser988, and Ser1044. The segment covering 976-990 (EPPKARSQNREDSFD) has biased composition (basic and acidic residues). Positions 1037–1049 (ESEEVGESTEEQE) are enriched in acidic residues. Tyr1095 carries the phosphotyrosine modification. Ser1124 and Ser1136 each carry phosphoserine. Positions 1165–1167 (TEL) are interaction with SCRIB.

It belongs to the MAGUK family. As to quaternary structure, homodimer. Interacts (via PDZ2 domain) with TJP1/ZO1 (via PDZ2 domain). Interacts with UBN1. Interacts with SCRIB. Interacts with OCLN. Interacts with SAFB in the nucleus. Interacts with USP53 (via the C-terminal region). Interacts with claudins, including CLDN1, CLDN2, CLDN3, CLDN5 and CLDN7. Interacts with CLDN18. Interacts (via N-terminus) with CTNNA1.

It is found in the cell junction. It localises to the adherens junction. The protein resides in the cell membrane. The protein localises to the nucleus. Its subcellular location is the tight junction. Its function is as follows. Plays a role in tight junctions and adherens junctions. Acts as a positive regulator of RANKL-induced osteoclast differentiation, potentially via mediating downstream transcriptional activity. This Mus musculus (Mouse) protein is Tight junction protein 2.